The chain runs to 369 residues: UDP-N-acetylglucosamine--N-acetylmuramyl-(pentapeptide) pyrophosphoryl-undecaprenol N-acetylglucosamine transferase (369 aa).

UDP-N-acetyl-alpha-D-glucosamine contacts are provided by residues 15–17 (TGG), asparagine 126, arginine 169, serine 197, and glutamine 299.

This sequence belongs to the glycosyltransferase 28 family. MurG subfamily.

It is found in the cell inner membrane. The catalysed reaction is di-trans,octa-cis-undecaprenyl diphospho-N-acetyl-alpha-D-muramoyl-L-alanyl-D-glutamyl-meso-2,6-diaminopimeloyl-D-alanyl-D-alanine + UDP-N-acetyl-alpha-D-glucosamine = di-trans,octa-cis-undecaprenyl diphospho-[N-acetyl-alpha-D-glucosaminyl-(1-&gt;4)]-N-acetyl-alpha-D-muramoyl-L-alanyl-D-glutamyl-meso-2,6-diaminopimeloyl-D-alanyl-D-alanine + UDP + H(+). Its pathway is cell wall biogenesis; peptidoglycan biosynthesis. Functionally, cell wall formation. Catalyzes the transfer of a GlcNAc subunit on undecaprenyl-pyrophosphoryl-MurNAc-pentapeptide (lipid intermediate I) to form undecaprenyl-pyrophosphoryl-MurNAc-(pentapeptide)GlcNAc (lipid intermediate II). This chain is UDP-N-acetylglucosamine--N-acetylmuramyl-(pentapeptide) pyrophosphoryl-undecaprenol N-acetylglucosamine transferase, found in Methylorubrum extorquens (strain CM4 / NCIMB 13688) (Methylobacterium extorquens).